The sequence spans 612 residues: Dihydroxy-acid dehydratase (612 aa).

Asp81 is a Mg(2+) binding site. Cys122 provides a ligand contact to [2Fe-2S] cluster. Mg(2+) is bound by residues Asp123 and Lys124. N6-carboxylysine is present on Lys124. Residue Cys195 coordinates [2Fe-2S] cluster. Glu491 contributes to the Mg(2+) binding site. Ser517 functions as the Proton acceptor in the catalytic mechanism.

It belongs to the IlvD/Edd family. As to quaternary structure, homodimer. [2Fe-2S] cluster is required as a cofactor. The cofactor is Mg(2+).

The enzyme catalyses (2R)-2,3-dihydroxy-3-methylbutanoate = 3-methyl-2-oxobutanoate + H2O. It catalyses the reaction (2R,3R)-2,3-dihydroxy-3-methylpentanoate = (S)-3-methyl-2-oxopentanoate + H2O. The protein operates within amino-acid biosynthesis; L-isoleucine biosynthesis; L-isoleucine from 2-oxobutanoate: step 3/4. It participates in amino-acid biosynthesis; L-valine biosynthesis; L-valine from pyruvate: step 3/4. Functionally, functions in the biosynthesis of branched-chain amino acids. Catalyzes the dehydration of (2R,3R)-2,3-dihydroxy-3-methylpentanoate (2,3-dihydroxy-3-methylvalerate) into 2-oxo-3-methylpentanoate (2-oxo-3-methylvalerate) and of (2R)-2,3-dihydroxy-3-methylbutanoate (2,3-dihydroxyisovalerate) into 2-oxo-3-methylbutanoate (2-oxoisovalerate), the penultimate precursor to L-isoleucine and L-valine, respectively. This chain is Dihydroxy-acid dehydratase, found in Bartonella henselae (strain ATCC 49882 / DSM 28221 / CCUG 30454 / Houston 1) (Rochalimaea henselae).